The primary structure comprises 271 residues: Phosphatidylglycerol--prolipoprotein diacylglyceryl transferase (271 aa).

The next 7 helical transmembrane spans lie at 25-45 (WYGI…KFFV), 60-80 (YFIW…ILIY), 103-123 (FVGI…IATL), 134-154 (WIFL…GRIG), 181-201 (PSQF…VYLA), 209-229 (GELI…CEFY), and 235-255 (GIGF…IMFI). Arg-152 lines the a 1,2-diacyl-sn-glycero-3-phospho-(1'-sn-glycerol) pocket.

The protein belongs to the Lgt family.

It localises to the cell inner membrane. The enzyme catalyses L-cysteinyl-[prolipoprotein] + a 1,2-diacyl-sn-glycero-3-phospho-(1'-sn-glycerol) = an S-1,2-diacyl-sn-glyceryl-L-cysteinyl-[prolipoprotein] + sn-glycerol 1-phosphate + H(+). It participates in protein modification; lipoprotein biosynthesis (diacylglyceryl transfer). In terms of biological role, catalyzes the transfer of the diacylglyceryl group from phosphatidylglycerol to the sulfhydryl group of the N-terminal cysteine of a prolipoprotein, the first step in the formation of mature lipoproteins. This chain is Phosphatidylglycerol--prolipoprotein diacylglyceryl transferase, found in Campylobacter jejuni subsp. doylei (strain ATCC BAA-1458 / RM4099 / 269.97).